A 420-amino-acid polypeptide reads, in one-letter code: Serine--tRNA ligase (420 aa).

225–227 (TLE) contacts L-serine. 256 to 258 (RQE) is an ATP binding site. L-serine is bound at residue Glu279. 343-346 (EVSS) is a binding site for ATP. L-serine is bound at residue Thr379.

The protein belongs to the class-II aminoacyl-tRNA synthetase family. Type-1 seryl-tRNA synthetase subfamily. In terms of assembly, homodimer. The tRNA molecule binds across the dimer.

The protein resides in the cytoplasm. It carries out the reaction tRNA(Ser) + L-serine + ATP = L-seryl-tRNA(Ser) + AMP + diphosphate + H(+). The enzyme catalyses tRNA(Sec) + L-serine + ATP = L-seryl-tRNA(Sec) + AMP + diphosphate + H(+). The protein operates within aminoacyl-tRNA biosynthesis; selenocysteinyl-tRNA(Sec) biosynthesis; L-seryl-tRNA(Sec) from L-serine and tRNA(Sec): step 1/1. Its function is as follows. Catalyzes the attachment of serine to tRNA(Ser). Is also able to aminoacylate tRNA(Sec) with serine, to form the misacylated tRNA L-seryl-tRNA(Sec), which will be further converted into selenocysteinyl-tRNA(Sec). This Mycoplasma pneumoniae (strain ATCC 29342 / M129 / Subtype 1) (Mycoplasmoides pneumoniae) protein is Serine--tRNA ligase.